Reading from the N-terminus, the 472-residue chain is Zinc finger imprinted 3 (472 aa).

The KRAB domain occupies 8 to 80 (VTFEDVTVNF…EEEVLGSGRA (73 aa)). 11 C2H2-type zinc fingers span residues 167–189 (LKCN…LRRH), 195–217 (FECH…QKTH), 223–245 (YKCE…QKMH), 251–273 (YQCK…EKIH), 279–301 (YQCN…KKVH), 307–329 (FQCT…QRIH), 335–357 (YKCS…EKIH), 363–385 (YECD…KKIH), 391–413 (YECN…QKTH), 419–441 (YRCS…KKTH), and 447–470 (YGCS…KRIH).

It belongs to the krueppel C2H2-type zinc-finger protein family.

The protein localises to the nucleus. Functionally, may be involved in transcriptional regulation. This Homo sapiens (Human) protein is Zinc finger imprinted 3 (ZIM3).